The chain runs to 90 residues: Small ribosomal subunit protein uS15c (90 aa).

The protein belongs to the universal ribosomal protein uS15 family. Part of the 30S ribosomal subunit.

It localises to the plastid. The protein localises to the chloroplast. The sequence is that of Small ribosomal subunit protein uS15c (rps15-A) from Brachypodium distachyon (Purple false brome).